The primary structure comprises 221 residues: Glutathione S-transferase alpha-5 (221 aa).

A GST N-terminal domain is found at Gly-3–Gly-83. An N6-succinyllysine modification is found at Lys-4. Glutathione contacts are provided by residues Tyr-9, Arg-45, Gln-54–Val-55, and Gln-67–Thr-68. The GST C-terminal domain occupies Asp-85–Phe-207.

Belongs to the GST superfamily. Alpha family. In terms of assembly, heterodimer of YC1 and YC2. As to expression, liver, nasal mucosa and epididymis.

It is found in the cytoplasm. It carries out the reaction RX + glutathione = an S-substituted glutathione + a halide anion + H(+). Conjugation of reduced glutathione to a wide number of exogenous and endogenous hydrophobic electrophiles. Has substantial activity toward aflatoxin B1-8,9-epoxide. The protein is Glutathione S-transferase alpha-5 (Gsta5) of Rattus norvegicus (Rat).